A 146-amino-acid chain; its full sequence is Leptin (146 aa).

An intrachain disulfide couples Cys-96 to Cys-146.

This sequence belongs to the leptin family.

Its subcellular location is the secreted. Key player in the regulation of energy balance and body weight control. Once released into the circulation, has central and peripheral effects by binding LEPR, found in many tissues, which results in the activation of several major signaling pathways. In the hypothalamus, acts as an appetite-regulating factor that induces a decrease in food intake and an increase in energy consumption by inducing anorexinogenic factors and suppressing orexigenic neuropeptides, also regulates bone mass and secretion of hypothalamo-pituitary-adrenal hormones. In the periphery, increases basal metabolism, influences reproductive function, regulates pancreatic beta-cell function and insulin secretion, is pro-angiogenic for endothelial cell and affects innate and adaptive immunity. In the arcuate nucleus of the hypothalamus, activates by depolarization POMC neurons inducing FOS and SOCS3 expression to release anorexigenic peptides and inhibits by hyperpolarization NPY neurons inducing SOCS3 with a consequent reduction on release of orexigenic peptides. In addition to its known satiety inducing effect, has a modulatory role in nutrient absorption. In the intestine, reduces glucose absorption by enterocytes by activating PKC and leading to a sequential activation of p38, PI3K and ERK signaling pathways which exerts an inhibitory effect on glucose absorption. Acts as a growth factor on certain tissues, through the activation of different signaling pathways increases expression of genes involved in cell cycle regulation such as CCND1, via JAK2-STAT3 pathway, or VEGFA, via MAPK1/3 and PI3K-AKT1 pathways. May also play an apoptotic role via JAK2-STAT3 pathway and up-regulation of BIRC5 expression. Pro-angiogenic, has mitogenic activity on vascular endothelial cells and plays a role in matrix remodeling by regulating the expression of matrix metalloproteinases (MMPs) and tissue inhibitors of metalloproteinases (TIMPs). In innate immunity, modulates the activity and function of neutrophils by increasing chemotaxis and the secretion of oxygen radicals. Increases phagocytosis by macrophages and enhances secretion of pro-inflammatory mediators. Increases cytotoxic ability of NK cells. Plays a pro-inflammatory role, in synergy with IL1B, by inducing NOS2 which promotes the production of IL6, IL8 and Prostaglandin E2, through a signaling pathway that involves JAK2, PI3K, MAP2K1/MEK1 and MAPK14/p38. In adaptive immunity, promotes the switch of memory T-cells towards T helper-1 cell immune responses. Increases CD4(+)CD25(-) T-cell proliferation and reduces autophagy during TCR (T-cell receptor) stimulation, through MTOR signaling pathway activation and BCL2 up-regulation. The sequence is that of Leptin (LEP) from Gorilla gorilla gorilla (Western lowland gorilla).